A 498-amino-acid chain; its full sequence is Resveratrol cleavage oxygenase 1 (498 aa).

Piceatannol contacts are provided by Tyr-105 and Lys-136. Trans-resveratrol is bound by residues Tyr-105 and Lys-136. Positions 169, 220, and 285 each coordinate Fe cation. Glu-355 is a binding site for piceatannol. Glu-355 is a trans-resveratrol binding site. Residue His-481 participates in Fe cation binding.

The protein belongs to the carotenoid oxygenase family. Fe(2+) is required as a cofactor.

The enzyme catalyses trans-resveratrol + O2 = 3,5-dihydroxybenzaldehyde + 4-hydroxybenzaldehyde. It catalyses the reaction piceatannol + O2 = 3,5-dihydroxybenzaldehyde + 3,4-dihydroxybenzaldehyde. Its function is as follows. Dioxygenase that cleaves the interphenyl C-alpha-C-beta double bond of resveratrol to yield 3,5-dihydroxybenzaldehyde and 4-hydroxybenzaldehyde. Also cleaves piceatannol, a compound that differs from resveratrol only in the occurrence of an additional hydroxyl group, which leads to the production of 3,4-dihydroxybenzaldehyde and 3,5-hydroxybenzaldehyde. The protein is Resveratrol cleavage oxygenase 1 of Aspergillus fumigatus (strain ATCC MYA-4609 / CBS 101355 / FGSC A1100 / Af293) (Neosartorya fumigata).